The chain runs to 543 residues: Probable protein kinase UbiB (543 aa).

A Protein kinase domain is found at 123 to 501 (DFDIVPLASA…KRQQAKGQFL (379 aa)). ATP is bound by residues 129-137 (LASASIAQV) and Lys152. Asp287 (proton acceptor) is an active-site residue. A helical transmembrane segment spans residues 517–539 (TSNITALASISAATGVTFWLLSW).

Belongs to the ABC1 family. UbiB subfamily.

It localises to the cell inner membrane. It functions in the pathway cofactor biosynthesis; ubiquinone biosynthesis [regulation]. Functionally, is probably a protein kinase regulator of UbiI activity which is involved in aerobic coenzyme Q (ubiquinone) biosynthesis. The polypeptide is Probable protein kinase UbiB (Aliivibrio salmonicida (strain LFI1238) (Vibrio salmonicida (strain LFI1238))).